A 711-amino-acid chain; its full sequence is Polyribonucleotide nucleotidyltransferase (711 aa).

Aspartate 486 and aspartate 492 together coordinate Mg(2+). The region spanning 553 to 612 is the KH domain; that stretch reads PRIHTIKINPDKIKDVIGKGGSVIRALTEETGTTIEIEDDGTVKIAATDGEKAKHAIRRI. The region spanning 622–690 is the S1 motif domain; the sequence is GRVYTGKVTR…RQGRIRLSIK (69 aa). Residues 689–711 are disordered; sequence IKEATEQSQPAAAPEAPAAEQGE. Residues 694–711 are compositionally biased toward low complexity; the sequence is EQSQPAAAPEAPAAEQGE.

This sequence belongs to the polyribonucleotide nucleotidyltransferase family. In terms of assembly, component of the RNA degradosome, which is a multiprotein complex involved in RNA processing and mRNA degradation. Mg(2+) is required as a cofactor.

Its subcellular location is the cytoplasm. It catalyses the reaction RNA(n+1) + phosphate = RNA(n) + a ribonucleoside 5'-diphosphate. Involved in mRNA degradation. Catalyzes the phosphorolysis of single-stranded polyribonucleotides processively in the 3'- to 5'-direction. The protein is Polyribonucleotide nucleotidyltransferase of Escherichia coli (strain ATCC 8739 / DSM 1576 / NBRC 3972 / NCIMB 8545 / WDCM 00012 / Crooks).